The sequence spans 141 residues: MAMLGLLLLASWALLGALGLQAEARPAPYGVKLCGREFIRAVIFTCGGSRWRRADILAHESLGDFFADGEANTDHLASELDEAVGSSEWLALTKSPQAFYGGRASWQGSPGVVRGSRDVLAGLSSSCCEWGCSKSQISSLC.

An N-terminal signal peptide occupies residues Met1–Ala24. Intrachain disulfides connect Cys34-Cys128, Cys46-Cys141, and Cys127-Cys132. Residues Ala54 to Arg117 constitute a propeptide, connecting peptide.

It belongs to the insulin family. In terms of assembly, heterodimer of a B chain and an A chain linked by two disulfide bonds. In terms of tissue distribution, high expression in the brain localized to the pons/medulla with highest levels in pars ventromedialis of the dorsal tegmental nucleus. Significant expression is also detected in the spleen, thymus, lung, testis and ovary.

The protein resides in the secreted. Its function is as follows. May play a role in neuropeptide signaling processes. Ligand for LGR7, relaxin-3 receptor-1 and relaxin-3 receptor-2. The polypeptide is Relaxin-3 (Rln3) (Mus musculus (Mouse)).